Consider the following 165-residue polypeptide: Ribosomal RNA large subunit methyltransferase H (165 aa).

Residue G109 coordinates S-adenosyl-L-methionine.

The protein belongs to the RNA methyltransferase RlmH family. In terms of assembly, homodimer.

Its subcellular location is the cytoplasm. It carries out the reaction pseudouridine(1915) in 23S rRNA + S-adenosyl-L-methionine = N(3)-methylpseudouridine(1915) in 23S rRNA + S-adenosyl-L-homocysteine + H(+). In terms of biological role, specifically methylates the pseudouridine at position 1915 (m3Psi1915) in 23S rRNA. This Methylorubrum populi (strain ATCC BAA-705 / NCIMB 13946 / BJ001) (Methylobacterium populi) protein is Ribosomal RNA large subunit methyltransferase H.